Here is a 276-residue protein sequence, read N- to C-terminus: Large ribosomal subunit protein uL2 (276 aa).

The segment at 219–276 (TVRGSVMNPNDHPHGGGEGKQPIGRKQQMTPWGKKARGIKTRDKKKASTSMIVRRRNG) is disordered. Residues 252-276 (KKARGIKTRDKKKASTSMIVRRRNG) show a composition bias toward basic residues.

This sequence belongs to the universal ribosomal protein uL2 family. Part of the 50S ribosomal subunit. Forms a bridge to the 30S subunit in the 70S ribosome.

In terms of biological role, one of the primary rRNA binding proteins. Required for association of the 30S and 50S subunits to form the 70S ribosome, for tRNA binding and peptide bond formation. It has been suggested to have peptidyltransferase activity; this is somewhat controversial. Makes several contacts with the 16S rRNA in the 70S ribosome. The protein is Large ribosomal subunit protein uL2 of Acholeplasma laidlawii (strain PG-8A).